A 224-amino-acid chain; its full sequence is Oxalate oxidase GF-3.8 (224 aa).

The N-terminal stretch at 1-23 (MGYSKNIASGMFAMLLLASAVLS) is a signal peptide. Residues cysteine 33 and cysteine 49 are joined by a disulfide bond. In terms of domain architecture, Cupin type-1 spans 63–214 (SKLAKAGNTS…ALRVEAGVVE (152 aa)). 2 N-linked (GlcNAc...) asparagine glycosylation sites follow: asparagine 70 and asparagine 75. Mn(2+) contacts are provided by histidine 111, histidine 113, glutamate 118, and histidine 160.

Belongs to the germin family. As to quaternary structure, oligomer (believed to be a pentamer but probably hexamer).

The protein resides in the secreted. It localises to the extracellular space. It is found in the apoplast. The protein localises to the cytoplasm. Its subcellular location is the cell wall. The enzyme catalyses oxalate + O2 + 2 H(+) = H2O2 + 2 CO2. In terms of biological role, produces developmental and stress-related release of hydrogen peroxide in the apoplast. May play an important role in several aspects of plant growth and defense mechanisms. The protein is Oxalate oxidase GF-3.8 of Triticum aestivum (Wheat).